A 459-amino-acid chain; its full sequence is Arginine biosynthesis bifunctional protein ArgJ, mitochondrial (459 aa).

Substrate contacts are provided by threonine 187, lysine 216, threonine 227, glutamate 314, asparagine 454, and threonine 459. The Nucleophile role is filled by threonine 227.

The protein belongs to the ArgJ family. Heterodimer of an alpha and a beta chain. In terms of processing, the alpha and beta chains are autoproteolytically processed from a single precursor protein within the mitochondrion.

It is found in the mitochondrion matrix. It carries out the reaction N(2)-acetyl-L-ornithine + L-glutamate = N-acetyl-L-glutamate + L-ornithine. The enzyme catalyses L-glutamate + acetyl-CoA = N-acetyl-L-glutamate + CoA + H(+). It functions in the pathway amino-acid biosynthesis; L-arginine biosynthesis; L-ornithine and N-acetyl-L-glutamate from L-glutamate and N(2)-acetyl-L-ornithine (cyclic): step 1/1. Its pathway is amino-acid biosynthesis; L-arginine biosynthesis; N(2)-acetyl-L-ornithine from L-glutamate: step 1/4. Functionally, catalyzes two activities which are involved in the cyclic version of arginine biosynthesis: the synthesis of acetylglutamate from glutamate and acetyl-CoA, and of ornithine by transacetylation between acetylornithine and glutamate. This is Arginine biosynthesis bifunctional protein ArgJ, mitochondrial from Uncinocarpus reesii (strain UAMH 1704).